The chain runs to 250 residues: uncharacterized protein (250 aa).

The N-terminal stretch at 1–19 is a signal peptide; the sequence is MAKPRNAAESKAAKAQANA. 2 helical membrane-spanning segments follow: residues 51-71 and 73-93; these read IGAF…AGGF and MFTM…VIFG. Positions 226 to 250 are disordered; the sequence is AGVMPKGPLPTTAKMRSVQRTVRRK.

It is found in the cell membrane. This is an uncharacterized protein from Mycobacterium tuberculosis (strain CDC 1551 / Oshkosh).